Consider the following 454-residue polypeptide: MMTDSMRLVWEKAKEAIRSQVPDQGYLMWIDPLRVVKAAADSVVLGCPNPLAKKWLMDHYRGLLESAMQQAAQRPLKVLLEVAECVAEAPETPEEAPQQLCLPAFADIPRPSSGRLLNRDFTFDSFVVGDCNDFAYSAALSVASKRSKLHAPLYLLAQTGLGKSHLSQAVGRQVMQESPEERVFYITAEDFTNEMIGALNTGTISSFKEKYRRNCDTLILEDVHFLSGKNRTQDELAFTLDSLMETNKRLVFTSAYLPSEIPKMHDSMRSRLNAGVISSLEAPDFRMRMRILQRKANSAKIALPMDVAEFMASELTGDIRHLESGIKGLAARNSIMGRGIDLKMAREVVGNIVRNRKALTLGVITKMVCKYYRVTEEDLRSRSRKQAIARPRQVAMYLGRRYTDQSLQAIGRTFNRYHATALHAVGVVERHIRENGDMREPVLFLCGKIEAGEF.

The segment at 1-83 (MMTDSMRLVW…RPLKVLLEVA (83 aa)) is domain I, interacts with DnaA modulators. The segment at 83–115 (AECVAEAPETPEEAPQQLCLPAFADIPRPSSGR) is domain II. A domain III, AAA+ region region spans residues 116 to 333 (LLNRDFTFDS…SGIKGLAARN (218 aa)). 4 residues coordinate ATP: Gly160, Gly162, Lys163, and Ser164. A domain IV, binds dsDNA region spans residues 334 to 454 (SIMGRGIDLK…LCGKIEAGEF (121 aa)).

It belongs to the DnaA family. As to quaternary structure, oligomerizes as a right-handed, spiral filament on DNA at oriC.

The protein localises to the cytoplasm. Functionally, plays an essential role in the initiation and regulation of chromosomal replication. ATP-DnaA binds to the origin of replication (oriC) to initiate formation of the DNA replication initiation complex once per cell cycle. Binds the DnaA box (a 9 base pair repeat at the origin) and separates the double-stranded (ds)DNA. Forms a right-handed helical filament on oriC DNA; dsDNA binds to the exterior of the filament while single-stranded (ss)DNA is stabiized in the filament's interior. The ATP-DnaA-oriC complex binds and stabilizes one strand of the AT-rich DNA unwinding element (DUE), permitting loading of DNA polymerase. After initiation quickly degrades to an ADP-DnaA complex that is not apt for DNA replication. Binds acidic phospholipids. This is Chromosomal replication initiator protein DnaA from Desulfatibacillum aliphaticivorans.